The primary structure comprises 291 residues: MSFRHFKRRLDTSSADESSSADEEHPDQNVSLTEKSASLSHSDLGGEILNGTGKNRTPNDGQESNESDGSPESDESPESEESSDNSDSSDSDDMRPLPRPLFMKKKANNLQKATKIDQPWNAQDDARVLQTKKENMIKNIDKANQVAKNYETMKLRLNTNYSTNEELIKQCLLLDDNDEVDSEKERQKWFERQNERKQKHRRIQLAKQRESEEYEAKRFEAMQKGKDGNTKYDVILDKEKEKLDHKKQRSAEKVEKSHNNNRYKITRTKNVEFGDLGKNSRDYEETEYSVI.

Disordered stretches follow at residues 1-99 and 239-266; these read MSFR…PLPR and EKEK…YKIT. Composition is skewed to polar residues over residues 28 to 41 and 52 to 62; these read QNVS…SLSH and TGKNRTPNDGQ. Residues 63–91 are compositionally biased toward acidic residues; that stretch reads ESNESDGSPESDESPESEESSDNSDSSDS. Positions 239–258 are enriched in basic and acidic residues; that stretch reads EKEKLDHKKQRSAEKVEKSH.

This sequence belongs to the SPP381 family. Component of the U4/U6-U5 tri-snRNP complex composed of the U4, U6 and U5 snRNAs and at least PRP3, PRP4, PRP6, PRP8, PRP18, PRP31, PRP38, SNU13, SNU23, SNU66, SNU114, SPP381, SMB1, SMD1, SMD2, SMD3, SMX2, SMX3, LSM2, LSM3, LSM4, LSM5, LSM6, LSM7, LSM8, BRR2 and DIB1. Interacts with PRP38.

It is found in the nucleus. In terms of biological role, component of the spliceosome and rRNA processing machinery. In association with the spliceosomal U4/U6.U5 tri-snRNP particle, required for splicing of pre-mRNA. The protein is Pre-mRNA-splicing factor SPP381 (SPP381) of Saccharomyces cerevisiae (strain ATCC 204508 / S288c) (Baker's yeast).